Reading from the N-terminus, the 1057-residue chain is Exportin-1 (1057 aa).

Residues 36-102 (AQMVLGKFQE…KNYIVSLIIR (67 aa)) enclose the Importin N-terminal domain. 11 HEAT repeats span residues 239–275 (AEPS…LNLG), 281–321 (AVFI…FIHT), 462–501 (NTQH…AQNK), 506–544 (RFLV…QYPR), 551–588 (KFLK…QCKR), 596–633 (EESQ…YMIA), 739–776 (KETL…DYRT), 781–818 (TRDP…TTLS), 855–892 (QQFK…NVSK), 902–925 (KTYL…KSGF), and 926–965 (ALEC…YVKE).

Belongs to the exportin family. Component of a nuclear export receptor complex.

The protein localises to the nucleus. The protein resides in the cytoplasm. Its subcellular location is the perinuclear region. Mediates the nuclear export of cellular proteins (cargos) bearing a leucine-rich nuclear export signal (NES). The chain is Exportin-1 (xpo1) from Dictyostelium discoideum (Social amoeba).